We begin with the raw amino-acid sequence, 132 residues long: L-ectoine synthase (132 aa).

It belongs to the ectoine synthase family.

The catalysed reaction is (2S)-4-acetamido-2-aminobutanoate = L-ectoine + H2O. It functions in the pathway amine and polyamine biosynthesis; ectoine biosynthesis; L-ectoine from L-aspartate 4-semialdehyde: step 3/3. Its function is as follows. Catalyzes the circularization of gamma-N-acetyl-alpha,gamma-diaminobutyric acid (ADABA) to ectoine (1,4,5,6-tetrahydro-2-methyl-4-pyrimidine carboxylic acid), which is an excellent osmoprotectant. The polypeptide is L-ectoine synthase (Hahella chejuensis (strain KCTC 2396)).